The chain runs to 246 residues: Small ribosomal subunit protein uS2 (246 aa).

The protein belongs to the universal ribosomal protein uS2 family.

The polypeptide is Small ribosomal subunit protein uS2 (Dictyoglomus thermophilum (strain ATCC 35947 / DSM 3960 / H-6-12)).